The following is a 380-amino-acid chain: MTVIRKKHPLIKIINHSFIDLPAPSNISSWWNFGSLLGLCLIVQILTGLFLAMHYTSDTATAFSSVAHICRDVNYGWLIRYMHANGASMFFICLFLHVGRGVYYGSYNMIETWNMGIVLLFAVMATAFMGYVLPWGQMSFWGATVITNLLSAIPYIGTTLVEWIWGGFSVDKATLTRFFAFHFILPFIITALVLVHLLFLHETGSNNPTGLNSDADKIPFHPYYTVKDFLGVLILLMAFMILTLFFPDILGDPDNYTPANPLNTPPHIKPEWYFLFAYAILRSIPNKLGGVLALILSIVILAFMPLLHTSKQRALTFRPITQTMYWILVADLLVLTWIGGQPVEYPFIIIGQTASIAYFTIIVIFMPIAGMIENDIMDLD.

A run of 4 helical transmembrane segments spans residues 33–53 (FGSLLGLCLIVQILTGLFLAM), 77–98 (WLIRYMHANGASMFFICLFLHV), 113–133 (WNMGIVLLFAVMATAFMGYVL), and 178–198 (FFAFHFILPFIITALVLVHLL). Heme contacts are provided by His83 and His97. Residues His182 and His196 each contribute to the heme site. His201 contributes to the a ubiquinone binding site. 4 consecutive transmembrane segments (helical) span residues 226 to 246 (VKDFLGVLILLMAFMILTLFF), 288 to 308 (LGGVLALILSIVILAFMPLLH), 320 to 340 (ITQTMYWILVADLLVLTWIGG), and 347 to 367 (FIIIGQTASIAYFTIIVIFMP).

Belongs to the cytochrome b family. The cytochrome bc1 complex contains 11 subunits: 3 respiratory subunits (MT-CYB, CYC1 and UQCRFS1), 2 core proteins (UQCRC1 and UQCRC2) and 6 low-molecular weight proteins (UQCRH/QCR6, UQCRB/QCR7, UQCRQ/QCR8, UQCR10/QCR9, UQCR11/QCR10 and a cleavage product of UQCRFS1). This cytochrome bc1 complex then forms a dimer. Requires heme as cofactor.

The protein resides in the mitochondrion inner membrane. In terms of biological role, component of the ubiquinol-cytochrome c reductase complex (complex III or cytochrome b-c1 complex) that is part of the mitochondrial respiratory chain. The b-c1 complex mediates electron transfer from ubiquinol to cytochrome c. Contributes to the generation of a proton gradient across the mitochondrial membrane that is then used for ATP synthesis. In Microtus arvalis (Common vole), this protein is Cytochrome b (MT-CYB).